A 192-amino-acid chain; its full sequence is Ethylene-responsive transcription factor ERF027 (192 aa).

A DNA-binding region (AP2/ERF) is located at residues 18–74 (VYRGIRCRSGKWVSEIREPRKTTRIWLGTYPMAEMAAAAYDVAAMALKGREAVLNFP). Disordered stretches follow at residues 104–132 (CEEGEEEKKAKEKKSSSSKSRARECHVDN) and 167–192 (APPSWMGSRPSDDSPENSNDEDLWGY). Residues 179–192 (DSPENSNDEDLWGY) show a composition bias toward acidic residues.

This sequence belongs to the AP2/ERF transcription factor family. ERF subfamily.

It localises to the nucleus. In terms of biological role, probably acts as a transcriptional activator. Binds to the GCC-box pathogenesis-related promoter element. May be involved in the regulation of gene expression by stress factors and by components of stress signal transduction pathways. This Arabidopsis thaliana (Mouse-ear cress) protein is Ethylene-responsive transcription factor ERF027 (ERF027).